A 370-amino-acid chain; its full sequence is DNA replication and repair protein RecF (370 aa).

An ATP-binding site is contributed by 30-37 (GENAQGKT).

This sequence belongs to the RecF family. Recruited to foci following DNA damage; probably interacts with RecO.

The protein resides in the cytoplasm. The protein localises to the nucleoid. In terms of biological role, the RecF protein is involved in DNA metabolism; it is required for DNA replication and normal SOS inducibility. RecF binds preferentially to single-stranded, linear DNA. It also seems to bind ATP. Is recruited to repair centers, foci that are the site of double-strand DNA break(s) after RecN and RecO; recruitment may depend on RecO. A positive modulator of RecA. The sequence is that of DNA replication and repair protein RecF from Bacillus subtilis (strain 168).